A 1789-amino-acid chain; its full sequence is Mediator of RNA polymerase II transcription subunit 12 (1789 aa).

4 disordered regions span residues 1–138 (MTSR…QRRG), 156–288 (SSPT…GSSA), 1592–1656 (IGTA…GWHA), and 1707–1727 (THLN…NPTR). Low complexity-rich tracts occupy residues 25–66 (SQQR…QQQQ) and 81–98 (TRNN…TLNN). Residues 107-124 (QDPTSIVSPADPSGSSPA) show a composition bias toward polar residues. Basic and acidic residues predominate over residues 220–229 (AVPDHSRREQ). Composition is skewed to low complexity over residues 271 to 288 (RSSA…GSSA), 1592 to 1628 (IGTA…SAVS), 1647 to 1656 (QQAQAQGWHA), and 1707 to 1716 (THLNLGNNSN).

This sequence belongs to the Mediator complex subunit 12 family. Component of the srb8-11 complex, which itself associates with the Mediator complex.

It is found in the nucleus. In terms of biological role, component of the srb8-11 complex. The srb8-11 complex is a regulatory module of the Mediator complex which is itself involved in regulation of basal and activated RNA polymerase II-dependent transcription. The srb8-11 complex may be involved in the transcriptional repression of a subset of genes regulated by Mediator. It may inhibit the association of the Mediator complex with RNA polymerase II to form the holoenzyme complex. This chain is Mediator of RNA polymerase II transcription subunit 12 (srb8), found in Neurospora crassa (strain ATCC 24698 / 74-OR23-1A / CBS 708.71 / DSM 1257 / FGSC 987).